The sequence spans 458 residues: Histone acetyltransferase KAT8 (458 aa).

Low complexity predominate over residues 1-14 (MAAQGATAAVAATT). Positions 1–52 (MAAQGATAAVAATTSGIVGEGEPGPGENTSVEGPARSPGRVSPPTPARGEPE) are disordered. At Ala2 the chain carries N-acetylalanine. Phosphoserine occurs at positions 37 and 42. One can recognise a Tudor-knot domain in the interval 55–110 (VEIGETYLCRRPDSTWHSAEVIQSRVNDQEGREEFYVHYVGFNRRLDEWVDKNRLA). Lys113 carries the post-translational modification N6-acetyllysine. Positions 140 to 149 (RNQKRKHDEI) match the Nuclear localization signal motif. Residues 174–447 (TKVKYVDKIH…VDSVCLKWAP (274 aa)) form the MYST-type HAT domain. Positions 174–458 (TKVKYVDKIH…KHKQVKLSKK (285 aa)) are sufficient for interaction with KANSL1. The C2HC MYST-type zinc-finger motif lies at 207 to 232 (LWLCEYCLKYMKFEKSYRFHLGQCQW). Zn(2+) is bound by residues Cys210, Cys213, His226, and Cys230. At Lys274 the chain carries N6-acetyllysine; by autocatalysis. Acetyl-CoA contacts are provided by Ile317, Thr319, Arg325, Arg326, Gly327, Gly329, and Lys330. Ser348 bears the Phosphoserine mark. Catalysis depends on Glu350, which acts as the Proton donor/acceptor. Residues Ser354, Ser363, Tyr408, and Lys432 each contribute to the acetyl-CoA site.

It belongs to the MYST (SAS/MOZ) family. In terms of assembly, component of a multisubunit histone acetyltransferase complex (MSL) at least composed of the MOF/KAT8, MSL1/hampin, MSL2L1 and MSL3L1. Component of the NSL complex at least composed of MOF/KAT8, KANSL1, KANSL2, KANSL3, MCRS1, PHF20, OGT1/OGT, WDR5 and HCFC1. Component of some MLL1/MLL complex, at least composed of the core components KMT2A/MLL1, ASH2L, HCFC1, WDR5 and RBBP5, as well as the facultative components BACC1, CHD8, E2F6, HSP70, INO80C, KANSL1, LAS1L, MAX, MCRS1, MGA, MOF/KAT8, PELP1, PHF20, PRP31, RING2, RUVB1/TIP49A, RUVB2/TIP49B, SENP3, TAF1, TAF4, TAF6, TAF7, TAF9 and TEX10. Interacts with the chromodomain of MORF4L1/MRG15. Interacts with ATM (via its Tudor-knot domain); possibly regulating the activity of ATM. Interacts with NELFD. In terms of processing, acetylation at Lys-274 facilitates cognate substrate Lys-binding and acetylation. Although considered as an autoacetylation event, acetylation at Lys-274 probably takes place via a non-enzymatic process following acetyl-CoA-binding, which primes KAT8 for cognate protein-lysine acetylation. Deacetylated by SIRT1.

Its subcellular location is the nucleus. It is found in the chromosome. The protein localises to the mitochondrion. The catalysed reaction is L-lysyl-[histone] + acetyl-CoA = N(6)-acetyl-L-lysyl-[histone] + CoA + H(+). It catalyses the reaction L-lysyl-[protein] + acetyl-CoA = N(6)-acetyl-L-lysyl-[protein] + CoA + H(+). It carries out the reaction propanoyl-CoA + L-lysyl-[protein] = N(6)-propanoyl-L-lysyl-[protein] + CoA + H(+). The acetyltransferase activity is inhibited by anacardic acid derivatives. Its function is as follows. Histone acetyltransferase that catalyzes histone H4 acetylation at 'Lys-5'- and 'Lys-8' (H4K5ac and H4K8ac) or 'Lys-16' (H4K16ac), depending on the context. Catalytic component of the MSL histone acetyltransferase complex, a multiprotein complex that mediates the majority of histone H4 acetylation at 'Lys-16' (H4K16ac), an epigenetic mark that prevents chromatin compaction. H4K16ac constitutes the only acetylation mark intergenerationally transmitted and regulates key biological processes, such as oogenesis, embryonic stem cell pluripotency, hematopoiesis or glucose metabolism. The MSL complex is required for chromosome stability and genome integrity by maintaining homeostatic levels of H4K16ac. The MSL complex is also involved in gene dosage by promoting up-regulation of genes expressed by the X chromosome. X up-regulation is required to compensate for autosomal biallelic expression. The MSL complex also participates in gene dosage compensation by promoting expression of Tsix non-coding RNA. As part of the NSL histone acetyltransferase complex, catalyzes histone H4 acetylation at 'Lys-5'- and 'Lys-8' (H4K5ac and H4K8ac) at transcription start sites and promotes transcription initiation. The NSL complex also acts as a regulator of gene expression in mitochondria: KAT8 associates with mitochondrial DNA and controls expression of respiratory genes in an acetyltransferase-dependent mechanism. Also functions as an acetyltransferase for non-histone targets, such as ALKBH5, COX17, IRF3, KDM1A/LSD1, LMNA, PAX7 or TP53/p53. Acts as an inhibitor of antiviral immunity by acetylating IRF3, preventing IRF3 recruitment to promoters. Acts as a regulator of asymmetric division in muscle stem cells by mediating acetylation of PAX7. As part of the NSL complex, acetylates TP53/p53 at 'Lys-120'. Acts as a regulator of epithelial-to-mesenchymal transition as part of the NSL complex by mediating acetylation of KDM1A/LSD1. The NSL complex is required for nuclear architecture maintenance by mediating acetylation of LMNA. Promotes mitochondrial integrity by catalyzing acetylation of COX17. In addition to protein acetyltransferase activity, able to mediate protein propionylation. This chain is Histone acetyltransferase KAT8 (Kat8), found in Rattus norvegicus (Rat).